A 470-amino-acid polypeptide reads, in one-letter code: Cholesterol 7-desaturase nvd 1 (470 aa).

The helical transmembrane segment at 67–87 (LALCIAGFSVLMYFLYVLVFV) threads the bilayer. The Rieske domain occupies 136-238 (FRLVDSQQLE…CREVNKAIFV (103 aa)). 4 residues coordinate [2Fe-2S] cluster: Cys176, His178, Cys196, and His199.

This sequence belongs to the cholesterol 7-desaturase family. The cofactor is [2Fe-2S] cluster.

The protein resides in the membrane. It catalyses the reaction cholesterol + NADPH + O2 + H(+) = 7-dehydrocholesterol + NADP(+) + 2 H2O. The catalysed reaction is cholesterol + NADH + O2 + H(+) = 7-dehydrocholesterol + NAD(+) + 2 H2O. It participates in steroid hormone biosynthesis; dafachronic acid biosynthesis. Its function is as follows. Catalyzes the production of 7-dehydrocholesterol (7-DHC or cholesta-5,7-dien-3beta-ol) by inserting a double bond (desaturating) at the C7-C8 single bond of cholesterol. Essential regulator of steroid biosynthesis as this reaction is the first step in the synthesis of the steroid hormone Delta(7)-dafachronic acid. The sequence is that of Cholesterol 7-desaturase nvd 1 from Ciona intestinalis (Transparent sea squirt).